Consider the following 116-residue polypeptide: S-adenosylmethionine decarboxylase proenzyme (116 aa).

Ser-63 acts as the Schiff-base intermediate with substrate; via pyruvic acid in catalysis. The residue at position 63 (Ser-63) is a Pyruvic acid (Ser); by autocatalysis. The active-site Proton acceptor; for processing activity is His-68. The active-site Proton donor; for catalytic activity is Cys-83.

This sequence belongs to the prokaryotic AdoMetDC family. Type 1 subfamily. Heterotetramer of two alpha and two beta chains arranged as a dimer of alpha/beta heterodimers. Pyruvate is required as a cofactor. Is synthesized initially as an inactive proenzyme. Formation of the active enzyme involves a self-maturation process in which the active site pyruvoyl group is generated from an internal serine residue via an autocatalytic post-translational modification. Two non-identical subunits are generated from the proenzyme in this reaction, and the pyruvate is formed at the N-terminus of the alpha chain, which is derived from the carboxyl end of the proenzyme. The post-translation cleavage follows an unusual pathway, termed non-hydrolytic serinolysis, in which the side chain hydroxyl group of the serine supplies its oxygen atom to form the C-terminus of the beta chain, while the remainder of the serine residue undergoes an oxidative deamination to produce ammonia and the pyruvoyl group blocking the N-terminus of the alpha chain.

It carries out the reaction S-adenosyl-L-methionine + H(+) = S-adenosyl 3-(methylsulfanyl)propylamine + CO2. The protein operates within amine and polyamine biosynthesis; S-adenosylmethioninamine biosynthesis; S-adenosylmethioninamine from S-adenosyl-L-methionine: step 1/1. In terms of biological role, catalyzes the decarboxylation of S-adenosylmethionine to S-adenosylmethioninamine (dcAdoMet), the propylamine donor required for the synthesis of the polyamines spermine and spermidine from the diamine putrescine. This Clostridium botulinum (strain Okra / Type B1) protein is S-adenosylmethionine decarboxylase proenzyme.